We begin with the raw amino-acid sequence, 272 residues long: Sulfur carrier protein FdhD (272 aa).

The active-site Cysteine persulfide intermediate is the C114.

This sequence belongs to the FdhD family.

It is found in the cytoplasm. Required for formate dehydrogenase (FDH) activity. Acts as a sulfur carrier protein that transfers sulfur from IscS to the molybdenum cofactor prior to its insertion into FDH. The polypeptide is Sulfur carrier protein FdhD (Mycolicibacterium paratuberculosis (strain ATCC BAA-968 / K-10) (Mycobacterium paratuberculosis)).